The following is a 147-amino-acid chain: 16 kDa phloem protein 2 (147 aa).

In terms of domain architecture, C2 spans M1–A103. The Ca(2+) site is built by D20, D26, D73, D75, and D81. The tract at residues E126–Y147 is disordered.

Ca(2+) is required as a cofactor.

Functionally, binds to both sense and antisense RNA. Can also bind sheared DNA and dodecamer DNA with a low affinity. Interacts with mesophyll plasmodesmata to mediate its own cell-to-cell transport and potentiate RNA trafficking. May play a role in plant defense signaling. The chain is 16 kDa phloem protein 2 from Arabidopsis thaliana (Mouse-ear cress).